The chain runs to 445 residues: GTPase Der (445 aa).

EngA-type G domains are found at residues 3–167 (PVIA…YAGQ) and 180–353 (VKIA…AAAM). Residues 9–16 (GRPNVGKS), 56–60 (DTGGF), 119–122 (NKAE), 186–193 (GRPNVGKS), 233–237 (DTAGL), and 298–301 (NKWD) each bind GTP. A KH-like domain is found at 354 to 438 (AKLPTPKLTR…PLRIEFRSST (85 aa)).

Belongs to the TRAFAC class TrmE-Era-EngA-EngB-Septin-like GTPase superfamily. EngA (Der) GTPase family. In terms of assembly, associates with the 50S ribosomal subunit.

Functionally, GTPase that plays an essential role in the late steps of ribosome biogenesis. This is GTPase Der from Paraburkholderia phytofirmans (strain DSM 17436 / LMG 22146 / PsJN) (Burkholderia phytofirmans).